A 432-amino-acid polypeptide reads, in one-letter code: Cyclic GMP-AMP synthase (432 aa).

110-115 (QGSFQY) is a binding site for GTP. Mg(2+) contacts are provided by D129 and D131. R180 provides a ligand contact to ATP. D191 provides a ligand contact to Mg(2+). ATP is bound at residue S255. GTP-binding residues include K283, S297, and D344. A Glycyl cysteine dithioester (Gly-Cys) (interchain with C-13 in Cap2) cross-link involves residue G432. A Glycyl cysteine dithioester (Gly-Cys) (interchain with C-493 in Cap2) cross-link involves residue G432. A Glycyl cysteine dithioester (Gly-Cys) (interchain with C-513 in Cap2) cross-link involves residue G432. G432 is covalently cross-linked (Glycyl lysine isopeptide (Gly-Lys) (interchain with K-? in acceptor proteins)).

This sequence belongs to the CD-NTase family. A02 subfamily. As to quaternary structure, a Cap2 dimer is bound on either side by a DncV monomer. Mg(2+) serves as cofactor. In terms of processing, in bacteria expressing capV-dncV-cap2-cap3, this protein is conjugated to about 130 cellular proteins by Cap2, most of which are involved in metabolism; more conjugated protein is found in the absence of Cap3. Most conjugation occurs via an isopeptide bond with the epsilon-amine of Lys on the target protein, but Cys-conjugation also occurs, including to Cap2. Conjugation or deconjugation from cellular proteins does not change the DncV activity in vitro, but does so in vivo during infection. Post-translationally, (Microbial infection) During phage T4 infection is conjugated to at least 2 T4 proteins (fibritin (wac) and dexA.2).

The enzyme catalyses GTP + ATP = 3',3'-cGAMP + 2 diphosphate. With respect to regulation, primed for activation by Cap2 which conjugates it to cellular proteins. cGAMP production is induced in phage T4 infected cells in a manner that requires Cap2 and Cap3, as well as a C-terminal Ala or Gly residue in this protein. Cyclic nucleotide synthase (second messenger synthase) of a CBASS antivirus system. CBASS (cyclic oligonucleotide-based antiphage signaling system) provides immunity against bacteriophages. The CD-NTase protein (DncV, this protein) synthesizes cyclic nucleotides in response to infection; these serve as specific second messenger signals. The signals activate a diverse range of effectors, leading to bacterial cell death and thus abortive phage infection. A type II-A(GA) CBASS system. Functionally, catalyzes the synthesis of 3',3'-cyclic GMP-AMP (cGAMP) from GTP and ATP, a second messenger in cell signal transduction. Its product controls the activity of cGAMP-activated phospholipase CapV, a patatin-like lipase that is a direct cGAMP receptor encoded in the dncV operon. In terms of biological role, protects E.coli against phage infection. When capV and dncV are introduced in E.coli MG1655 there is 1000-fold protection against phage P1; protection against other phage (T2, T4, T5, T6 and lambda-vir) requires the 2 subsequent genes (cap2 and cap3). In another paper the capV-dncV-cap2-cap3 operon gives 10(4)-10(5)-fold protection against phages lambda, T2, T4 and T6, about 1000-fold protection against P1 and 10-fold protection against T5. This chain is Cyclic GMP-AMP synthase, found in Escherichia coli (strain TW11681).